A 649-amino-acid polypeptide reads, in one-letter code: 1-deoxy-D-xylulose-5-phosphate synthase 1 (649 aa).

Thiamine diphosphate contacts are provided by residues His73 and 113 to 115 (SHA). Residue Asp144 coordinates Mg(2+). Residues 145–146 (GA), Asn174, Tyr285, and Glu367 each bind thiamine diphosphate. Mg(2+) is bound at residue Asn174. The tract at residues 623-649 (LLPGTGTRPGAQEYRPRMPLTDWSEPA) is disordered.

It belongs to the transketolase family. DXPS subfamily. Homodimer. The cofactor is Mg(2+). Requires thiamine diphosphate as cofactor.

The catalysed reaction is D-glyceraldehyde 3-phosphate + pyruvate + H(+) = 1-deoxy-D-xylulose 5-phosphate + CO2. It functions in the pathway metabolic intermediate biosynthesis; 1-deoxy-D-xylulose 5-phosphate biosynthesis; 1-deoxy-D-xylulose 5-phosphate from D-glyceraldehyde 3-phosphate and pyruvate: step 1/1. Catalyzes the acyloin condensation reaction between C atoms 2 and 3 of pyruvate and glyceraldehyde 3-phosphate to yield 1-deoxy-D-xylulose-5-phosphate (DXP). In Kitasatospora griseola (Streptomyces griseolosporeus), this protein is 1-deoxy-D-xylulose-5-phosphate synthase 1.